Reading from the N-terminus, the 182-residue chain is Auxin-responsive protein IAA9 (182 aa).

Residues 1 to 41 (MELELGLAPPNSGHLVVDELSSSSSSGGGSGSAPVSASSAG) are disordered. The short motif at 3 to 7 (LELGL) is the EAR-like (transcriptional repression) element. Residues 32–41 (SAPVSASSAG) are compositionally biased toward low complexity. Residues 92–182 (ANYVKVKKEG…RSVKRLKILG (91 aa)) form the PB1 domain.

Belongs to the Aux/IAA family. As to quaternary structure, homodimers and heterodimers. As to expression, expressed in etiolated shoots and flowers.

The protein resides in the nucleus. In terms of biological role, aux/IAA proteins are short-lived transcriptional factors that function as repressors of early auxin response genes at low auxin concentrations. The sequence is that of Auxin-responsive protein IAA9 (IAA9) from Oryza sativa subsp. japonica (Rice).